The primary structure comprises 629 residues: tRNA uridine 5-carboxymethylaminomethyl modification enzyme MnmG (629 aa).

Residue 13–18 (GGGHAG) coordinates FAD. Residue 273–287 (GPRYCPSIEDKIHRF) participates in NAD(+) binding.

It belongs to the MnmG family. Homodimer. Heterotetramer of two MnmE and two MnmG subunits. It depends on FAD as a cofactor.

It is found in the cytoplasm. In terms of biological role, NAD-binding protein involved in the addition of a carboxymethylaminomethyl (cmnm) group at the wobble position (U34) of certain tRNAs, forming tRNA-cmnm(5)s(2)U34. The chain is tRNA uridine 5-carboxymethylaminomethyl modification enzyme MnmG from Shewanella amazonensis (strain ATCC BAA-1098 / SB2B).